The sequence spans 330 residues: HTH-type transcriptional regulator GanR (330 aa).

The HTH lacI-type domain occupies Ala-2 to Lys-57. Positions Ile-4–Asn-23 form a DNA-binding region, H-T-H motif.

Negatively regulates the expression of the ganSPQAB operon. Inhibits transcription of the operon by binding to an operator in the promoter region. In the presence of galactobiose, GanR dissociates from the promoter, resulting in the expression of the gan operon. This chain is HTH-type transcriptional regulator GanR, found in Bacillus subtilis (strain 168).